The sequence spans 446 residues: Bifunctional protein GlmU (446 aa).

The segment at 1-226 is pyrophosphorylase; the sequence is MLAVAILAAG…PDEVNGINDR (226 aa). Residues 7–10, lysine 21, glutamine 73, and 78–79 contribute to the UDP-N-acetyl-alpha-D-glucosamine site; these read LAAG and GT. Aspartate 103 is a binding site for Mg(2+). Residues glycine 140, glutamate 155, asparagine 170, and asparagine 224 each contribute to the UDP-N-acetyl-alpha-D-glucosamine site. Position 224 (asparagine 224) interacts with Mg(2+). Residues 227–247 are linker; sequence CQLANCEALLQERLRNYWMKE. Residues 248–446 are N-acetyltransferase; it reads GVTFTDPASC…SKQLIKNGWQ (199 aa). Arginine 329 and lysine 347 together coordinate UDP-N-acetyl-alpha-D-glucosamine. Catalysis depends on histidine 359, which acts as the Proton acceptor. Residues tyrosine 362 and asparagine 373 each contribute to the UDP-N-acetyl-alpha-D-glucosamine site. Acetyl-CoA-binding positions include alanine 376, 382–383, alanine 419, and arginine 436; that span reads NY.

The protein in the N-terminal section; belongs to the N-acetylglucosamine-1-phosphate uridyltransferase family. In the C-terminal section; belongs to the transferase hexapeptide repeat family. As to quaternary structure, homotrimer. The cofactor is Mg(2+).

It localises to the cytoplasm. The enzyme catalyses alpha-D-glucosamine 1-phosphate + acetyl-CoA = N-acetyl-alpha-D-glucosamine 1-phosphate + CoA + H(+). It carries out the reaction N-acetyl-alpha-D-glucosamine 1-phosphate + UTP + H(+) = UDP-N-acetyl-alpha-D-glucosamine + diphosphate. The protein operates within nucleotide-sugar biosynthesis; UDP-N-acetyl-alpha-D-glucosamine biosynthesis; N-acetyl-alpha-D-glucosamine 1-phosphate from alpha-D-glucosamine 6-phosphate (route II): step 2/2. It functions in the pathway nucleotide-sugar biosynthesis; UDP-N-acetyl-alpha-D-glucosamine biosynthesis; UDP-N-acetyl-alpha-D-glucosamine from N-acetyl-alpha-D-glucosamine 1-phosphate: step 1/1. It participates in bacterial outer membrane biogenesis; LPS lipid A biosynthesis. Functionally, catalyzes the last two sequential reactions in the de novo biosynthetic pathway for UDP-N-acetylglucosamine (UDP-GlcNAc). The C-terminal domain catalyzes the transfer of acetyl group from acetyl coenzyme A to glucosamine-1-phosphate (GlcN-1-P) to produce N-acetylglucosamine-1-phosphate (GlcNAc-1-P), which is converted into UDP-GlcNAc by the transfer of uridine 5-monophosphate (from uridine 5-triphosphate), a reaction catalyzed by the N-terminal domain. The chain is Bifunctional protein GlmU from Prochlorococcus marinus (strain MIT 9313).